The following is a 177-amino-acid chain: Adenine phosphoribosyltransferase (177 aa).

The protein belongs to the purine/pyrimidine phosphoribosyltransferase family. As to quaternary structure, homodimer.

The protein resides in the cytoplasm. It catalyses the reaction AMP + diphosphate = 5-phospho-alpha-D-ribose 1-diphosphate + adenine. Its pathway is purine metabolism; AMP biosynthesis via salvage pathway; AMP from adenine: step 1/1. In terms of biological role, catalyzes a salvage reaction resulting in the formation of AMP, that is energically less costly than de novo synthesis. This chain is Adenine phosphoribosyltransferase, found in Acidothermus cellulolyticus (strain ATCC 43068 / DSM 8971 / 11B).